A 493-amino-acid polypeptide reads, in one-letter code: Lysostaphin (493 aa).

The signal sequence occupies residues 1 to 23; sequence MKKTKNNYYTRPLAIGLSTFALA. Positions 24 to 247 are excised as a propeptide; it reads SIVYGGIQNE…ALVQNRTALR (224 aa). A run of 14 repeats spans residues 49-61, 62-74, 75-87, 88-100, 101-113, 114-126, 127-139, 140-152, 153-165, 166-178, 179-191, 192-204, 205-217, and 218-230. Residues 49 to 243 are 15 X 13 AA approximate tandem repeats of A-E-V-E-T-S-K-A-P-V-E-N-T; sequence AEVETSKAPV…ETSKALVQNR (195 aa). The interval 52-232 is disordered; it reads ETSKAPVENT…SKAPVENTAE (181 aa). One copy of the 15; approximate repeat lies at 231 to 243; the sequence is AEVETSKALVQNR. Residues histidine 279 and aspartate 283 each coordinate Zn(2+). The active site involves histidine 360. Residue histidine 362 participates in Zn(2+) binding. Residues 413–481 form the SH3b domain; sequence SESASFTPNT…YLPVRTWNKS (69 aa).

This sequence belongs to the peptidase M23B family. In terms of assembly, monomer. It depends on Zn(2+) as a cofactor.

The protein localises to the secreted. It catalyses the reaction Hydrolysis of the -Gly-|-Gly- bond in the pentaglycine inter-peptide link joining staphylococcal cell wall peptidoglycans.. Functionally, lyses staphylococcal cells by hydrolyzing the polyglycine interpeptide bridges of the peptidoglycan. This Staphylococcus simulans protein is Lysostaphin (lss).